We begin with the raw amino-acid sequence, 261 residues long: Syntaxin-7 (261 aa).

S2 carries the N-acetylserine modification. The Cytoplasmic portion of the chain corresponds to 2–238 (SYTPGIGGDS…DYQRKSRKTL (237 aa)). Residue T4 is modified to Phosphothreonine. Residue S45 is modified to Phosphoserine. Positions 47 to 68 (ELRQLLQQKQQYTNQLAKETDK) form a coiled coil. Position 75 is a phosphoserine (S75). T79 bears the Phosphothreonine mark. S125, S126, S129, and S205 each carry phosphoserine. Residues 128–148 (VSGGFPEDSSKEKNLVSWESQ) form a disordered region. A t-SNARE coiled-coil homology domain is found at 165 to 227 (LRLIHERESS…QQANQQLSRA (63 aa)). Residues 239 to 259 (CIIIFILVVRIVIICLIVWGL) traverse the membrane as a helical; Anchor for type IV membrane protein segment. Residues 260–261 (KG) are Vesicular-facing.

Belongs to the syntaxin family. As to quaternary structure, interacts with VPS11, VPS16 and VPS18. Interacts with VPS33A. Forms a SNARE complex with VTI1B, STX8 and VAMP8 which functions in the homotypic fusion of late endosomes. Component of the SNARE complex composed of STX7, STX8, VAMP7 and VTI1B that is required for heterotypic fusion of late endosomes with lysosomes. Interacts with TPC1.

The protein localises to the early endosome membrane. May be involved in protein trafficking from the plasma membrane to the early endosome (EE) as well as in homotypic fusion of endocytic organelles. Mediates the endocytic trafficking from early endosomes to late endosomes and lysosomes. The polypeptide is Syntaxin-7 (Stx7) (Mus musculus (Mouse)).